Consider the following 366-residue polypeptide: Galactoside alpha-(1,2)-fucosyltransferase 1 (366 aa).

Residues 1 to 8 are Cytoplasmic-facing; it reads MWPLSHRH. Residues 9–25 form a helical; Signal-anchor for type II membrane protein membrane-spanning segment; sequence LCLAFLLVCVLSAISFF. Over 26–366 the chain is Lumenal; that stretch reads LHIHQDSIRH…LSPLWTLAEP (341 aa). 3 N-linked (GlcNAc...) asparagine glycosylation sites follow: Asn66, Asn302, and Asn328.

This sequence belongs to the glycosyltransferase 11 family.

It is found in the golgi apparatus. The protein localises to the golgi stack membrane. The enzyme catalyses a beta-D-galactosyl-(1-&gt;4)-N-acetyl-beta-D-glucosaminyl derivative + GDP-beta-L-fucose = an alpha-L-Fuc-(1-&gt;2)-beta-D-Gal-(1-&gt;4)-beta-D-GlcNAc derivative + GDP + H(+). The catalysed reaction is a ganglioside GA1 + GDP-beta-L-fucose = a ganglioside Fuc-GA1 + GDP + H(+). It carries out the reaction a beta-D-Gal-(1-&gt;3)-beta-D-GlcNAc-(1-&gt;3)-beta-D-Gal-(1-&gt;4)-beta-D-Glc-(1&lt;-&gt;1')-Cer(d18:1(4E)) + GDP-beta-L-fucose = alpha-L-fucosyl-(1-&gt;2)- beta-D-galactosyl-(1-&gt;3)-N-acetyl-beta-D-glucosaminyl-(1-&gt;3)-beta-D-galactosyl-(1-&gt;4)-beta-D-glucosyl-(1&lt;-&gt;1')-N-acylsphing-4-enine + GDP + H(+). It catalyses the reaction a neolactoside nLc4Cer(d18:1(4E)) + GDP-beta-L-fucose = a neolactoside IV(2)-alpha-Fuc-nLc4Cer(d18:1(4E)) + GDP + H(+). The enzyme catalyses a ganglioside GM1 + GDP-beta-L-fucose = a ganglioside Fuc-GM1 + GDP + H(+). The catalysed reaction is beta-D-galactosyl-(1-&gt;3)-N-acetyl-D-galactosamine + GDP-beta-L-fucose = alpha-L-fucosyl-(1-&gt;2)-beta-D-galactosyl-(1-&gt;3)-N-acetyl-D-galactosamine + GDP + H(+). It functions in the pathway protein modification; protein glycosylation. In terms of biological role, catalyzes the transfer of L-fucose, from a guanosine diphosphate-beta-L-fucose, to the terminal galactose residue of glycoconjugates through an alpha(1,2) linkage leading to H antigen synthesis that is an intermediate substrate in the synthesis of ABO blood group antigens. H antigen is essential for maturation of the glomerular layer of the main olfactory bulb, in cell migration and early cell-cell contacts during tumor associated angiogenesis. Preferentially fucosylates soluble lactose and to a lesser extent fucosylates glycolipids gangliosides GA1 and GM1a. The polypeptide is Galactoside alpha-(1,2)-fucosyltransferase 1 (Aotus azarae (Azara's night monkey)).